The primary structure comprises 224 residues: Thiamine-triphosphatase (224 aa).

The residue at position 2 (alanine 2) is an N-acetylalanine. The CYTH domain occupies 5–201; the sequence is LIEVERKFAP…AKLMVYLQRF (197 aa). Positions 7 and 9 each coordinate Mg(2+). Substrate is bound by residues lysine 11, arginine 55, arginine 57, lysine 65, and arginine 125. 3 residues coordinate Mg(2+): aspartate 145, glutamate 157, and glutamate 159. Glutamate 157 contacts substrate. Lysine 193 is a substrate binding site.

The protein belongs to the ThTPase family. Monomer. Requires Mg(2+) as cofactor.

The protein localises to the cytoplasm. The enzyme catalyses thiamine triphosphate + H2O = thiamine diphosphate + phosphate + H(+). In terms of biological role, hydrolase highly specific for thiamine triphosphate (ThTP). In Mus musculus (Mouse), this protein is Thiamine-triphosphatase (Thtpa).